Consider the following 387-residue polypeptide: Methionine aminopeptidase 1 (387 aa).

Ser-2 bears the N-acetylserine mark. Residues 2–10 (STATTTVTT) constitute a propeptide that is removed on maturation. The C6H2-type zinc finger occupies 19–73 (KIYCSGLQCGRETSSQMKCPVCLKQGIVSIFCDTSCYENNYKAHKALHNAKDGLE). Zn(2+)-binding residues include Cys-22, Cys-27, Cys-37, Cys-40, Cys-50, Cys-54, His-62, and His-66. Residue His-202 coordinates a protein. Asp-219, Asp-230, and His-294 together coordinate Zn(2+). His-301 contacts a protein. Glu-327 and Glu-358 together coordinate Zn(2+).

The protein belongs to the peptidase M24A family. Methionine aminopeptidase type 1 subfamily. In terms of assembly, associates with the 60S ribosomal subunit of the 80S translational complex. Requires Zn(2+) as cofactor. Co(2+) is required as a cofactor. The cofactor is Mn(2+). It depends on Fe(2+) as a cofactor.

It is found in the cytoplasm. The catalysed reaction is Release of N-terminal amino acids, preferentially methionine, from peptides and arylamides.. Its activity is regulated as follows. In contract to the MetAP 2 isoform, is not inhibited by the fungal metabolite fumagillin, an antiangiogenic drug. Cotranslationally removes the N-terminal methionine from nascent proteins. The N-terminal methionine is often cleaved when the second residue in the primary sequence is small and uncharged (Met-Ala-, Cys, Gly, Pro, Ser, Thr, or Val). Plays the major role in N-terminal methionine removal. Less efficient when the second residue is Val. The sequence is that of Methionine aminopeptidase 1 (MAP1) from Saccharomyces cerevisiae (strain ATCC 204508 / S288c) (Baker's yeast).